The following is a 346-amino-acid chain: FAS-associated factor 2 (346 aa).

Residue lysine 68 is modified to N6-acetyllysine. Residues 176–251 are a coiled coil; sequence SERLEREERN…EEKERKLECL (76 aa). Positions 200-262 are disordered; that stretch reads ASLRADQEKE…PEPSPDDPDS (63 aa). Positions 204–249 are enriched in basic and acidic residues; it reads ADQEKERKKREERERKRRKEEEVQQQKLAEERRRQNLQEEKERKLE. Residues 258 to 340 form the UBX domain; the sequence is DDPDSVKIIF…GLSHTEVLFV (83 aa).

Identified in a complex that contains SEL1L, OS9, FAF2/UBXD8, UBE2J1/UBC6E and AUP1. Interacts with YOD1. Interacts (via N-terminus) with UBQLN2 (via C-terminus). Interacts with PNPLA2 and UBAC2. Interacts with ZFAND2B; probably through VCP. Interacts with LMBR1L.

It is found in the cytoplasm. It localises to the lipid droplet. The protein resides in the endoplasmic reticulum. Its function is as follows. Plays an important role in endoplasmic reticulum-associated degradation (ERAD) that mediates ubiquitin-dependent degradation of misfolded endoplasmic reticulum proteins. By controlling the steady-state expression of the IGF1R receptor, indirectly regulates the insulin-like growth factor receptor signaling pathway. Involved in inhibition of lipid droplet degradation by binding to phospholipase PNPL2 and inhibiting its activity by promoting dissociation of PNPL2 from its endogenous activator, ABHD5 which inhibits the rate of triacylglycerol hydrolysis. Involved in stress granule disassembly: associates with ubiquitinated G3BP1 in response to heat shock, thereby promoting interaction between ubiquitinated G3BP1 and VCP, followed by G3BP1 extraction from stress granules and stress granule disassembly. This is FAS-associated factor 2 (Faf2) from Rattus norvegicus (Rat).